A 194-amino-acid chain; its full sequence is Molybdenum cofactor guanylyltransferase (194 aa).

GTP contacts are provided by residues leucine 12–glycine 14, lysine 25, asparagine 53, aspartate 71, and aspartate 101. Aspartate 101 contributes to the Mg(2+) binding site.

Belongs to the MobA family. In terms of assembly, monomer. Requires Mg(2+) as cofactor.

Its subcellular location is the cytoplasm. The enzyme catalyses Mo-molybdopterin + GTP + H(+) = Mo-molybdopterin guanine dinucleotide + diphosphate. Transfers a GMP moiety from GTP to Mo-molybdopterin (Mo-MPT) cofactor (Moco or molybdenum cofactor) to form Mo-molybdopterin guanine dinucleotide (Mo-MGD) cofactor. This is Molybdenum cofactor guanylyltransferase from Escherichia coli O6:H1 (strain CFT073 / ATCC 700928 / UPEC).